Reading from the N-terminus, the 629-residue chain is tRNA uridine 5-carboxymethylaminomethyl modification enzyme MnmG (629 aa).

FAD-binding positions include 14–19 (GAGHAG), valine 126, and serine 181. 273–287 (GPRYCPSIEDKVVRF) provides a ligand contact to NAD(+). Residue glutamine 370 participates in FAD binding.

Belongs to the MnmG family. As to quaternary structure, homodimer. Heterotetramer of two MnmE and two MnmG subunits. FAD is required as a cofactor.

It is found in the cytoplasm. Functionally, NAD-binding protein involved in the addition of a carboxymethylaminomethyl (cmnm) group at the wobble position (U34) of certain tRNAs, forming tRNA-cmnm(5)s(2)U34. The chain is tRNA uridine 5-carboxymethylaminomethyl modification enzyme MnmG from Bacillus mycoides (strain KBAB4) (Bacillus weihenstephanensis).